The sequence spans 55 residues: Large ribosomal subunit protein bL33 (55 aa).

It belongs to the bacterial ribosomal protein bL33 family.

This chain is Large ribosomal subunit protein bL33, found in Mycobacterium leprae (strain Br4923).